Reading from the N-terminus, the 97-residue chain is ESAT-6-like protein EsxG (97 aa).

The residue at position 2 (Ser2) is an N-acetylserine.

Belongs to the WXG100 family. CFP-10 subfamily. In terms of assembly, forms a tight 1:1 complex with EsxH.

The protein resides in the secreted. Its function is as follows. EsxG, in complex with EsxH, disrupts ESCRT function and impairs host phagosome maturation, thereby promoting intracellular bacterial growth. The complex acts by interacting, via EsxH, with the host hepatocyte growth factor-regulated tyrosine kinase substrate (HGS/HRS), a component of the ESCRT machinery. EsxG stabilizes EsxH in the host cytosol. The chain is ESAT-6-like protein EsxG from Mycobacterium tuberculosis (strain ATCC 25618 / H37Rv).